A 341-amino-acid polypeptide reads, in one-letter code: Ribulose-5-phosphate reductase (341 aa).

The Zn(2+) site is built by Cys-38, His-64, Glu-65, and Glu-144.

The protein belongs to the zinc-containing alcohol dehydrogenase family. Zn(2+) is required as a cofactor.

It catalyses the reaction D-ribitol 5-phosphate + NADP(+) = D-ribulose 5-phosphate + NADPH + H(+). Its pathway is cell wall biogenesis; poly(ribitol phosphate) teichoic acid biosynthesis. Its function is as follows. Catalyzes the NADPH dependent reduction of D-ribulose 5-phosphate to D-ribitol 5-phosphate. This chain is Ribulose-5-phosphate reductase, found in Bacillus spizizenii (strain ATCC 23059 / NRRL B-14472 / W23) (Bacillus subtilis subsp. spizizenii).